We begin with the raw amino-acid sequence, 218 residues long: Uracil-DNA glycosylase (218 aa).

Residue D68 is the Proton acceptor of the active site.

Belongs to the uracil-DNA glycosylase (UDG) superfamily. UNG family. As to quaternary structure, homodimer. Interacts with protein OPG148. Component of the Uracil-DNA glycosylase(UDG)-OPG148-polymerase complex; OPG148 and UDG form a heterodimeric processivity factor that associates with OPG71 to form the processive polymerase holoenzyme.

It carries out the reaction Hydrolyzes single-stranded DNA or mismatched double-stranded DNA and polynucleotides, releasing free uracil.. Its function is as follows. Plays an essential role in viral replication as a component of the DNA polymerase processivity factor. Excises uracil residues from the DNA which can arise as a result of misincorporation of dUMP residues by DNA polymerase or due to deamination of cytosine. The chain is Uracil-DNA glycosylase (OPG116) from Vaccinia virus (strain Ankara) (VACV).